We begin with the raw amino-acid sequence, 101 residues long: Trp operon repressor homolog (101 aa).

A DNA-binding region spans residues glutamine 59–leucine 82.

It belongs to the TrpR family. Homodimer.

It is found in the cytoplasm. Functionally, this protein is an aporepressor. When complexed with L-tryptophan it binds the operator region of the trp operon and prevents the initiation of transcription. In Mannheimia succiniciproducens (strain KCTC 0769BP / MBEL55E), this protein is Trp operon repressor homolog.